The primary structure comprises 1465 residues: DNA polymerase III PolC-type (1465 aa).

The 157-residue stretch at 427-583 folds into the Exonuclease domain; that stretch reads YVVFDVETTG…YDAEATGRLL (157 aa).

It belongs to the DNA polymerase type-C family. PolC subfamily.

It is found in the cytoplasm. It catalyses the reaction DNA(n) + a 2'-deoxyribonucleoside 5'-triphosphate = DNA(n+1) + diphosphate. Functionally, required for replicative DNA synthesis. This DNA polymerase also exhibits 3' to 5' exonuclease activity. This is DNA polymerase III PolC-type from Streptococcus pyogenes serotype M6 (strain ATCC BAA-946 / MGAS10394).